Reading from the N-terminus, the 388-residue chain is Chorismate synthase (388 aa).

Residues arginine 39 and arginine 45 each contribute to the NADP(+) site. FMN contacts are provided by residues 130–132 (RSS), 251–252 (NA), glycine 296, 311–315 (KPIPT), and arginine 337.

This sequence belongs to the chorismate synthase family. As to quaternary structure, homotetramer. FMNH2 serves as cofactor.

The catalysed reaction is 5-O-(1-carboxyvinyl)-3-phosphoshikimate = chorismate + phosphate. It participates in metabolic intermediate biosynthesis; chorismate biosynthesis; chorismate from D-erythrose 4-phosphate and phosphoenolpyruvate: step 7/7. In terms of biological role, catalyzes the anti-1,4-elimination of the C-3 phosphate and the C-6 proR hydrogen from 5-enolpyruvylshikimate-3-phosphate (EPSP) to yield chorismate, which is the branch point compound that serves as the starting substrate for the three terminal pathways of aromatic amino acid biosynthesis. This reaction introduces a second double bond into the aromatic ring system. This Streptococcus pyogenes serotype M1 protein is Chorismate synthase.